The following is a 338-amino-acid chain: Adenylosuccinate synthetase (338 aa).

GTP-binding positions include 12 to 18 and 42 to 44; these read GDEGKGK and GHT. Catalysis depends on aspartate 13, which acts as the Proton acceptor. Mg(2+)-binding residues include aspartate 13 and glycine 42. IMP contacts are provided by residues 13–16, 40–43, threonine 127, arginine 141, glutamine 179, threonine 194, and arginine 256; these read DEGK and NAGH. Histidine 43 functions as the Proton donor in the catalytic mechanism. 252–258 is a substrate binding site; it reads TVTGRRR. GTP is bound by residues arginine 258, 284-286, and 324-326; these read CLD and STG.

It belongs to the adenylosuccinate synthetase family. In terms of assembly, homodimer. It depends on Mg(2+) as a cofactor.

Its subcellular location is the cytoplasm. The enzyme catalyses IMP + L-aspartate + GTP = N(6)-(1,2-dicarboxyethyl)-AMP + GDP + phosphate + 2 H(+). Its pathway is purine metabolism; AMP biosynthesis via de novo pathway; AMP from IMP: step 1/2. In terms of biological role, plays an important role in the de novo pathway of purine nucleotide biosynthesis. Catalyzes the first committed step in the biosynthesis of AMP from IMP. The sequence is that of Adenylosuccinate synthetase from Methanococcus maripaludis (strain DSM 14266 / JCM 13030 / NBRC 101832 / S2 / LL).